The primary structure comprises 814 residues: Protein kintoun (814 aa).

Residues 234-246 (AANTARSPASPAP) show a composition bias toward low complexity. 2 disordered regions span residues 234-259 (AANT…EPRC) and 357-490 (ARQE…MGDP). Positions 388 to 404 (AAREESADGTGADHGEK) are enriched in basic and acidic residues. Residues Ser-444 and Ser-618 each carry the phosphoserine modification. Residues 654-686 (AGLQGKGKGVREGCPLSEAEAADQSATSPAASD) are disordered. Over residues 675–686 (ADQSATSPAASD) the composition is skewed to low complexity.

This sequence belongs to the PIH1 family. Kintoun subfamily. In terms of assembly, interacts with DNAI2 and HSPA1A. Interacts with CFAP300. Interacts with DNAAF4. Interacts with DNAAF6/PIH1D3. In terms of tissue distribution, expressed in nearly all organs of adult, with higher expression in tissues known to have motile cilia and flagella, such as brain and testis.

It is found in the cytoplasm. It localises to the dynein axonemal particle. Required for cytoplasmic pre-assembly of axonemal dyneins, thereby playing a central role in motility in cilia and flagella. Involved in pre-assembly of dynein arm complexes in the cytoplasm before intraflagellar transport loads them for the ciliary compartment. In Mus musculus (Mouse), this protein is Protein kintoun.